Here is a 923-residue protein sequence, read N- to C-terminus: Alanine--tRNA ligase (923 aa).

Zn(2+) contacts are provided by His611, His615, Cys714, and His718.

The protein belongs to the class-II aminoacyl-tRNA synthetase family. Requires Zn(2+) as cofactor.

It localises to the cytoplasm. The enzyme catalyses tRNA(Ala) + L-alanine + ATP = L-alanyl-tRNA(Ala) + AMP + diphosphate. Its function is as follows. Catalyzes the attachment of alanine to tRNA(Ala) in a two-step reaction: alanine is first activated by ATP to form Ala-AMP and then transferred to the acceptor end of tRNA(Ala). Also edits incorrectly charged Ser-tRNA(Ala) and Gly-tRNA(Ala) via its editing domain. This Methanosarcina barkeri (strain Fusaro / DSM 804) protein is Alanine--tRNA ligase.